The chain runs to 300 residues: NAD kinase (300 aa).

The active-site Proton acceptor is the aspartate 75. Residues 75 to 76 (DG), 149 to 150 (ND), arginine 177, aspartate 179, 190 to 195 (TAYALS), alanine 214, and glutamine 248 each bind NAD(+).

It belongs to the NAD kinase family. The cofactor is a divalent metal cation.

It localises to the cytoplasm. The catalysed reaction is NAD(+) + ATP = ADP + NADP(+) + H(+). Functionally, involved in the regulation of the intracellular balance of NAD and NADP, and is a key enzyme in the biosynthesis of NADP. Catalyzes specifically the phosphorylation on 2'-hydroxyl of the adenosine moiety of NAD to yield NADP. The polypeptide is NAD kinase (Burkholderia vietnamiensis (strain G4 / LMG 22486) (Burkholderia cepacia (strain R1808))).